Reading from the N-terminus, the 509-residue chain is Putative thymidine phosphorylase (509 aa).

This sequence belongs to the thymidine/pyrimidine-nucleoside phosphorylase family. Type 2 subfamily.

The enzyme catalyses thymidine + phosphate = 2-deoxy-alpha-D-ribose 1-phosphate + thymine. The protein is Putative thymidine phosphorylase of Chelativorans sp. (strain BNC1).